Reading from the N-terminus, the 199-residue chain is Acireductone dioxygenase 1 (199 aa).

Fe(2+) contacts are provided by His99, His101, Glu105, and His144. Ni(2+) is bound by residues His99, His101, Glu105, and His144.

This sequence belongs to the acireductone dioxygenase (ARD) family. Fe(2+) serves as cofactor. Ni(2+) is required as a cofactor.

The protein resides in the cytoplasm. Its subcellular location is the nucleus. The catalysed reaction is 1,2-dihydroxy-5-(methylsulfanyl)pent-1-en-3-one + O2 = 4-methylsulfanyl-2-oxobutanoate + formate + 2 H(+). The enzyme catalyses 1,2-dihydroxy-5-(methylsulfanyl)pent-1-en-3-one + O2 = 3-(methylsulfanyl)propanoate + CO + formate + 2 H(+). It participates in amino-acid biosynthesis; L-methionine biosynthesis via salvage pathway; L-methionine from S-methyl-5-thio-alpha-D-ribose 1-phosphate: step 5/6. In terms of biological role, catalyzes 2 different reactions between oxygen and the acireductone 1,2-dihydroxy-3-keto-5-methylthiopentene (DHK-MTPene) depending upon the metal bound in the active site. Fe-containing acireductone dioxygenase (Fe-ARD) produces formate and 2-keto-4-methylthiobutyrate (KMTB), the alpha-ketoacid precursor of methionine in the methionine recycle pathway. Ni-containing acireductone dioxygenase (Ni-ARD) produces methylthiopropionate, carbon monoxide and formate, and does not lie on the methionine recycle pathway. In Oryza sativa subsp. indica (Rice), this protein is Acireductone dioxygenase 1 (ARD1).